A 123-amino-acid polypeptide reads, in one-letter code: Large ribosomal subunit protein bL19 (123 aa).

Belongs to the bacterial ribosomal protein bL19 family.

This protein is located at the 30S-50S ribosomal subunit interface and may play a role in the structure and function of the aminoacyl-tRNA binding site. The sequence is that of Large ribosomal subunit protein bL19 from Ruegeria sp. (strain TM1040) (Silicibacter sp.).